The following is a 258-amino-acid chain: Snake venom serine protease 2 (258 aa).

A signal peptide spans 1–18 (MVLIRVLANLLILQLSYA). The propeptide occupies 19–24 (QKSSEL). The Peptidase S1 domain maps to 25–249 (VFGGRPCNIN…YNDWVQSIIA (225 aa)). 6 disulfide bridges follow: Cys-31–Cys-163, Cys-50–Cys-66, Cys-98–Cys-256, Cys-142–Cys-210, Cys-174–Cys-189, and Cys-200–Cys-225. A glycan (N-linked (GlcNAc...) asparagine) is linked at Asn-44. Residues His-65 and Asp-110 each act as charge relay system in the active site. 2 N-linked (GlcNAc...) asparagine glycosylation sites follow: Asn-122 and Asn-185. Ser-204 (charge relay system) is an active-site residue.

It belongs to the peptidase S1 family. Snake venom subfamily. Monomer. In terms of tissue distribution, expressed by the venom gland.

The protein localises to the secreted. Inhibited by PMSF at 2 mM concentration but not by EDTA. Snake venom serine protease that may act in the hemostasis system of the prey. Has weak fibrinogen clotting activity. Possesses amidolysis activity towards S-2251 (substrate for plasmin) but has no hydrolytic activity with S-2302 (plasma kallikrein substrate) or S-2238 (thrombin substrate). The polypeptide is Snake venom serine protease 2 (Protobothrops jerdonii (Jerdon's pitviper)).